The primary structure comprises 775 residues: Glutamine--tRNA ligase (775 aa).

A2 carries the N-acetylalanine modification. S70 is modified (phosphoserine). The 'HIGH' region signature appears at 270–280 (PEPNGILHIGH). Residues 271-273 (EPN) and 277-283 (HIGHAKA) each bind ATP. D303 is a binding site for L-glutamine. K309 is modified (N6-acetyllysine). Y438 is a binding site for L-glutamine. ATP-binding positions include T457, 486 to 487 (RL), and 494 to 496 (VSK). Positions 493–497 (VVSKR) match the 'KMSKS' region motif. Position 495 is a phosphoserine (S495).

The protein belongs to the class-I aminoacyl-tRNA synthetase family. Monomer. Part of a multisubunit complex that groups tRNA ligases for Arg (RARS1), Asp (DARS1), Gln (QARS1), Ile (IARS1), Leu (LARS1), Lys (KARS1), Met (MARS1) the bifunctional ligase for Glu and Pro (EPRS1) and the auxiliary subunits AIMP1/p43, AIMP2/p38 and EEF1E1/p18. Interacts with RARS1. Part of a complex composed of RARS1, QARS1 and AIMP1.

It is found in the cytoplasm. The protein localises to the cytosol. The catalysed reaction is tRNA(Gln) + L-glutamine + ATP = L-glutaminyl-tRNA(Gln) + AMP + diphosphate. Functionally, glutamine--tRNA ligase. Plays a critical role in brain development. This is Glutamine--tRNA ligase (QARS1) from Bos taurus (Bovine).